Reading from the N-terminus, the 103-residue chain is Small ribosomal subunit protein uS10 (103 aa).

The protein belongs to the universal ribosomal protein uS10 family. In terms of assembly, part of the 30S ribosomal subunit.

Its function is as follows. Involved in the binding of tRNA to the ribosomes. In Haemophilus ducreyi (strain 35000HP / ATCC 700724), this protein is Small ribosomal subunit protein uS10.